The chain runs to 163 residues: Cyclic pyranopterin monophosphate synthase (163 aa).

Residues 74–76 (MCH) and 111–112 (ME) contribute to the substrate site. Asp-126 is a catalytic residue.

This sequence belongs to the MoaC family. As to quaternary structure, homohexamer; trimer of dimers.

It catalyses the reaction (8S)-3',8-cyclo-7,8-dihydroguanosine 5'-triphosphate = cyclic pyranopterin phosphate + diphosphate. Its pathway is cofactor biosynthesis; molybdopterin biosynthesis. Functionally, catalyzes the conversion of (8S)-3',8-cyclo-7,8-dihydroguanosine 5'-triphosphate to cyclic pyranopterin monophosphate (cPMP). The sequence is that of Cyclic pyranopterin monophosphate synthase from Desulfitobacterium hafniense (strain DSM 10664 / DCB-2).